Reading from the N-terminus, the 250-residue chain is 26S proteasome non-ATPase regulatory subunit 8 (250 aa).

In terms of domain architecture, PCI spans 63 to 233 (HDFETFDDYI…QEKPVNLDTV (171 aa)).

It belongs to the proteasome subunit S14 family.

In terms of biological role, acts as a regulatory subunit of the 26S proteasome which is involved in the ATP-dependent degradation of ubiquitinated proteins. This is 26S proteasome non-ATPase regulatory subunit 8 from Caenorhabditis elegans.